An 84-amino-acid polypeptide reads, in one-letter code: Envelope glycoprotein N (84 aa).

The N-terminal stretch at 1 to 26 (MSCKKGARQRLYVSLWLFYILVFAAA) is a signal peptide. Topologically, residues 27–45 (TEMDFYSSECHSHTYEIVL) are virion surface. A helical membrane pass occupies residues 46–66 (NSFSSIWLLINLFLLLCSFAI). Residues 67-84 (FLKYWCYKTFASETVKGY) are Intravirion-facing.

This sequence belongs to the herpesviridae glycoprotein N family. Interacts (via N-terminus) with gM (via N-terminus). The gM-gN heterodimer forms the gCII complex.

It is found in the virion membrane. It localises to the host membrane. Its subcellular location is the host Golgi apparatus. The protein resides in the host trans-Golgi network. Functionally, envelope glycoprotein necessary for proper maturation of gM and modulation of its membrane fusion activity. Also plays a critical role in virion morphogenesis. The chain is Envelope glycoprotein N from Human herpesvirus 6B (strain Z29) (HHV-6 variant B).